Consider the following 451-residue polypeptide: Tubulin alpha-2 chain (451 aa).

GTP is bound at residue Q11. K40 carries the post-translational modification N6-acetyllysine. 7 residues coordinate GTP: E71, S140, G144, T145, T179, N206, and N228. E71 contacts Mg(2+). E254 is an active-site residue. Residues 432–451 are disordered; sequence YEEVGIDTADGEDDEEANDY.

The protein belongs to the tubulin family. Dimer of alpha and beta chains. A typical microtubule is a hollow water-filled tube with an outer diameter of 25 nm and an inner diameter of 15 nM. Alpha-beta heterodimers associate head-to-tail to form protofilaments running lengthwise along the microtubule wall with the beta-tubulin subunit facing the microtubule plus end conferring a structural polarity. Microtubules usually have 13 protofilaments but different protofilament numbers can be found in some organisms and specialized cells. The cofactor is Mg(2+). In terms of processing, undergoes a tyrosination/detyrosination cycle, the cyclic removal and re-addition of a C-terminal tyrosine residue by the enzymes tubulin tyrosine carboxypeptidase (TTCP) and tubulin tyrosine ligase (TTL), respectively. Acetylation of alpha chains at Lys-40 stabilizes microtubules and affects affinity and processivity of microtubule motors. This modification has a role in multiple cellular functions, ranging from cell motility, cell cycle progression or cell differentiation to intracellular trafficking and signaling.

Its subcellular location is the cytoplasm. The protein localises to the cytoskeleton. It carries out the reaction GTP + H2O = GDP + phosphate + H(+). Functionally, tubulin is the major constituent of microtubules, a cylinder consisting of laterally associated linear protofilaments composed of alpha- and beta-tubulin heterodimers. Microtubules grow by the addition of GTP-tubulin dimers to the microtubule end, where a stabilizing cap forms. Below the cap, tubulin dimers are in GDP-bound state, owing to GTPase activity of alpha-tubulin. This chain is Tubulin alpha-2 chain, found in Homarus americanus (American lobster).